The primary structure comprises 512 residues: Aldehyde dehydrogenase B (512 aa).

Residues Glu-268 and Cys-307 contribute to the active site.

Homotetramer.

The enzyme catalyses an aldehyde + NADP(+) + H2O = a carboxylate + NADPH + 2 H(+). The catalysed reaction is acetaldehyde + NADP(+) + H2O = acetate + NADPH + 2 H(+). It catalyses the reaction chloroacetaldehyde + NADP(+) + H2O = chloroacetate + NADPH + 2 H(+). It carries out the reaction propanal + NADP(+) + H2O = propanoate + NADPH + 2 H(+). Its activity is regulated as follows. Magnesium increases enzyme activity with various substrates. In terms of biological role, catalyzes the NADP(+)-dependent oxidation of diverse aldehydes to their corresponding carboxylic acids, with a preference for acetaldehyde and chloroacetaldehyde. May play a role in detoxifying aldehydes present during stationary phase. Cannot use NAD(+) instead of NADP(+) as the electron acceptor. To a lesser extent is also able to oxidize propionaldehyde (propanal), benzaldehyde, mafosfamide, and 4-hydroperoxycyclophosphamide. Does not use either glyceraldehyde or glycolaldehyde as substrates. This is Aldehyde dehydrogenase B from Escherichia coli (strain K12).